The primary structure comprises 582 residues: GDP-Man:Man(3)GlcNAc(2)-PP-Dol alpha-1,2-mannosyltransferase (582 aa).

The Lumenal segment spans residues Met1–Gln12. The helical transmembrane segment at Ala13–Val33 threads the bilayer. The Cytoplasmic portion of the chain corresponds to Arg34–Thr240. Positions Met241–Tyr261 form an intramembrane region, helical. The Cytoplasmic portion of the chain corresponds to Thr262 to Tyr461. An intramembrane region (helical) is located at residues Ala462–Val482. Residues Pro483–Glu582 are Cytoplasmic-facing.

Belongs to the glycosyltransferase group 1 family.

The protein resides in the endoplasmic reticulum membrane. The enzyme catalyses an alpha-D-Man-(1-&gt;3)-[alpha-D-Man-(1-&gt;6)]-beta-D-Man-(1-&gt;4)-beta-D-GlcNAc-(1-&gt;4)-alpha-D-GlcNAc-diphospho-di-trans,poly-cis-dolichol + 2 GDP-alpha-D-mannose = an alpha-D-Man-(1-&gt;2)-alpha-D-Man-(1-&gt;2)-alpha-D-Man-(1-&gt;3)-[alpha-D-Man-(1-&gt;6)]-beta-D-Man-(1-&gt;4)-beta-D-GlcNAc-(1-&gt;4)-alpha-D-GlcNAc-diphospho-di-trans,poly-cis-dolichol + 2 GDP + 2 H(+). It participates in protein modification; protein glycosylation. Its function is as follows. GDP-Man:Man(3)GlcNAc(2)-PP-Dol alpha-1,2-mannosyltransferase that operates in the biosynthetic pathway of dolichol-linked oligosaccharides, the glycan precursors employed in protein asparagine (N)-glycosylation. The assembly of dolichol-linked oligosaccharides begins on the cytosolic side of the endoplasmic reticulum membrane and finishes in its lumen. The sequential addition of sugars to dolichol pyrophosphate produces dolichol-linked oligosaccharides containing fourteen sugars, including two GlcNAcs, nine mannoses and three glucoses. Once assembled, the oligosaccharide is transferred from the lipid to nascent proteins by oligosaccharyltransferases. Catalyzes, on the cytoplasmic face of the endoplasmic reticulum, the addition of the fourth and fifth mannose residues to the dolichol-linked oligosaccharide chain, to produce Man(5)GlcNAc(2)-PP-dolichol core oligosaccharide. The protein is GDP-Man:Man(3)GlcNAc(2)-PP-Dol alpha-1,2-mannosyltransferase (ALG11) of Eremothecium gossypii (strain ATCC 10895 / CBS 109.51 / FGSC 9923 / NRRL Y-1056) (Yeast).